Reading from the N-terminus, the 508-residue chain is Anaerobic nitric oxide reductase transcription regulator NorR (508 aa).

The residue at position 56 (D56) is a 4-aspartylphosphate. Residues 186–415 (MIGQSPAMAR…LEHAIHRAAV (230 aa)) form the Sigma-54 factor interaction domain. ATP contacts are provided by residues 214–221 (GETGVGKE) and 277–286 (ADQGTLFLDE). Residues 483 to 502 (WAATARALELDSGNLHRLAK) constitute a DNA-binding region (H-T-H motif).

The protein operates within nitrogen metabolism; nitric oxide reduction. Functionally, required for the expression of anaerobic nitric oxide (NO) reductase, acts as a transcriptional activator for at least the norVW operon. Activation also requires sigma-54. The polypeptide is Anaerobic nitric oxide reductase transcription regulator NorR (Aeromonas hydrophila subsp. hydrophila (strain ATCC 7966 / DSM 30187 / BCRC 13018 / CCUG 14551 / JCM 1027 / KCTC 2358 / NCIMB 9240 / NCTC 8049)).